The primary structure comprises 375 residues: All-trans-retinol dehydrogenase [NAD(+)] ADH1B (375 aa).

At S2 the chain carries N-acetylserine. S23 carries the post-translational modification Phosphoserine. At Y35 the chain carries Phosphotyrosine. Zn(2+) contacts are provided by C47, H68, C98, C101, C104, C112, and C175. Residues 200–205, D224, K229, 293–295, and R370 each bind NAD(+); these read GLGGVG and VGV.

Belongs to the zinc-containing alcohol dehydrogenase family. Dimer of identical or non-identical chains of three types; alpha, beta and gamma. The cofactor is Zn(2+).

Its subcellular location is the cytoplasm. The catalysed reaction is all-trans-retinol + NAD(+) = all-trans-retinal + NADH + H(+). The enzyme catalyses all-trans-4-hydroxyretinol + NAD(+) = all-trans-4-hydroxyretinal + NADH + H(+). It carries out the reaction all-trans-4-oxoretinol + NAD(+) = all-trans-4-oxoretinal + NADH + H(+). In terms of biological role, catalyzes the NAD-dependent oxidation of all-trans-retinol and its derivatives such as all-trans-4-hydroxyretinol and may participate in retinoid metabolism. In vitro can also catalyze the NADH-dependent reduction of all-trans-retinal and its derivatives such as all-trans-4-oxoretinal. Catalyzes in the oxidative direction with higher efficiency. Has the same affinity for all-trans-4-hydroxyretinol and all-trans-4-oxoretinal. The protein is All-trans-retinol dehydrogenase [NAD(+)] ADH1B of Homo sapiens (Human).